The following is a 479-amino-acid chain: Aspartyl/glutamyl-tRNA(Asn/Gln) amidotransferase subunit B (479 aa).

The protein belongs to the GatB/GatE family. GatB subfamily. Heterotrimer of A, B and C subunits.

It carries out the reaction L-glutamyl-tRNA(Gln) + L-glutamine + ATP + H2O = L-glutaminyl-tRNA(Gln) + L-glutamate + ADP + phosphate + H(+). The enzyme catalyses L-aspartyl-tRNA(Asn) + L-glutamine + ATP + H2O = L-asparaginyl-tRNA(Asn) + L-glutamate + ADP + phosphate + 2 H(+). Functionally, allows the formation of correctly charged Asn-tRNA(Asn) or Gln-tRNA(Gln) through the transamidation of misacylated Asp-tRNA(Asn) or Glu-tRNA(Gln) in organisms which lack either or both of asparaginyl-tRNA or glutaminyl-tRNA synthetases. The reaction takes place in the presence of glutamine and ATP through an activated phospho-Asp-tRNA(Asn) or phospho-Glu-tRNA(Gln). This chain is Aspartyl/glutamyl-tRNA(Asn/Gln) amidotransferase subunit B, found in Geobacter sp. (strain M21).